The sequence spans 160 residues: Cyclic pyranopterin monophosphate synthase (160 aa).

Residues 77 to 79 (LCH) and 115 to 116 (ME) contribute to the substrate site. D130 is an active-site residue.

Belongs to the MoaC family. In terms of assembly, homohexamer; trimer of dimers.

The enzyme catalyses (8S)-3',8-cyclo-7,8-dihydroguanosine 5'-triphosphate = cyclic pyranopterin phosphate + diphosphate. It functions in the pathway cofactor biosynthesis; molybdopterin biosynthesis. Its function is as follows. Catalyzes the conversion of (8S)-3',8-cyclo-7,8-dihydroguanosine 5'-triphosphate to cyclic pyranopterin monophosphate (cPMP). In Parvibaculum lavamentivorans (strain DS-1 / DSM 13023 / NCIMB 13966), this protein is Cyclic pyranopterin monophosphate synthase.